The primary structure comprises 359 residues: Glycerol-3-phosphate dehydrogenase [NAD(P)+] (359 aa).

Thr11, Trp12, Arg32, and Lys107 together coordinate NADPH. The sn-glycerol 3-phosphate site is built by Lys107 and Gly138. Ala142 serves as a coordination point for NADPH. Sn-glycerol 3-phosphate is bound by residues Lys193, Asp246, Ser256, Arg257, and Asn258. The active-site Proton acceptor is Lys193. Arg257 is an NADPH binding site. Residues Val281 and Glu283 each coordinate NADPH.

It belongs to the NAD-dependent glycerol-3-phosphate dehydrogenase family.

Its subcellular location is the cytoplasm. It catalyses the reaction sn-glycerol 3-phosphate + NAD(+) = dihydroxyacetone phosphate + NADH + H(+). It carries out the reaction sn-glycerol 3-phosphate + NADP(+) = dihydroxyacetone phosphate + NADPH + H(+). The protein operates within membrane lipid metabolism; glycerophospholipid metabolism. Its function is as follows. Catalyzes the reduction of the glycolytic intermediate dihydroxyacetone phosphate (DHAP) to sn-glycerol 3-phosphate (G3P), the key precursor for phospholipid synthesis. The protein is Glycerol-3-phosphate dehydrogenase [NAD(P)+] of Dehalococcoides mccartyi (strain ATCC BAA-2100 / JCM 16839 / KCTC 5957 / BAV1).